We begin with the raw amino-acid sequence, 1412 residues long: DNA-directed RNA polymerase subunit beta' (1412 aa).

Residues cysteine 70, cysteine 72, cysteine 85, and cysteine 88 each contribute to the Zn(2+) site. Residues aspartate 460, aspartate 462, and aspartate 464 each coordinate Mg(2+). Residues cysteine 819, cysteine 893, cysteine 900, and cysteine 903 each contribute to the Zn(2+) site. The disordered stretch occupies residues 1391 to 1412 (AEESFEFGTPETPAAEQQHSGE).

This sequence belongs to the RNA polymerase beta' chain family. The RNAP catalytic core consists of 2 alpha, 1 beta, 1 beta' and 1 omega subunit. When a sigma factor is associated with the core the holoenzyme is formed, which can initiate transcription. Mg(2+) serves as cofactor. Zn(2+) is required as a cofactor.

It catalyses the reaction RNA(n) + a ribonucleoside 5'-triphosphate = RNA(n+1) + diphosphate. In terms of biological role, DNA-dependent RNA polymerase catalyzes the transcription of DNA into RNA using the four ribonucleoside triphosphates as substrates. The chain is DNA-directed RNA polymerase subunit beta' from Paraburkholderia phytofirmans (strain DSM 17436 / LMG 22146 / PsJN) (Burkholderia phytofirmans).